A 351-amino-acid polypeptide reads, in one-letter code: UDP-N-acetylglucosamine transporter slc35b4 (351 aa).

Transmembrane regions (helical) follow at residues 6–26, 37–57, 77–97, 104–124, 136–156, 173–193, 209–229, 252–274, 282–302, and 306–326; these read LISLIPISMIMVGCCSNVISL, AILVTFFQFATVAFISFFVNI, IPLKTYFLMVSIFFILSVLNN, IPIPFHMIFRSSSLLSTIVIG, QILSLIMVTLGIIFATFSSMP, FSIGMLMLIAAMFLSSILGLI, TIFYSHLFSLPFFLLFKDDIL, TLWVYLIVNVLTQYVCIQGVFIL, TCTLVISIRKFLSIIISVIYF, and FTSLLFTGTILVFLGTFMYST.

The protein belongs to the nucleotide-sugar transporter family. SLC35B subfamily.

It localises to the golgi apparatus membrane. Sugar transporter that specifically mediates the transport of UDP-N-acetylglucosamine (UDP-GlcNAc) from cytosol into Golgi. This Dictyostelium discoideum (Social amoeba) protein is UDP-N-acetylglucosamine transporter slc35b4 (slc35b4).